The chain runs to 348 residues: Protein disulfide isomerase CRELD2 (348 aa).

Positions 1 to 22 (MHLPPAAAVGLLLLLLPPPARV) are cleaved as a signal peptide. The short motif at 30–33 (CQRC) is the CXXC element. 4 cysteine pairs are disulfide-bonded: cysteine 30/cysteine 33, cysteine 139/cysteine 153, cysteine 147/cysteine 165, and cysteine 167/cysteine 176. The EGF-like 1 domain occupies 135–177 (DCQECQGGSQRPCSGNGHCDGDGSRQGDGSCQCHVGYKGPLCI). An FU 1 repeat occupies 192–239 (HSFCTACDESCKTCSGPTNKGCVECEVGWTRVEDACVDVDECAAETPP). An N-linked (GlcNAc...) asparagine glycan is attached at asparagine 250. The FU 2 repeat unit spans residues 252 to 299 (SYTCEECDSTCVGCTGKGPANCKECISGYSKQKGECADIDECSLETKV). The CXXC signature appears at 262-265 (CVGC). Disulfide bonds link cysteine 262–cysteine 265, cysteine 293–cysteine 307, cysteine 300–cysteine 316, and cysteine 318–cysteine 328. Residues 289 to 329 (DIDECSLETKVCKKENENCYNTPGSFVCVCPEGFEEDRRCL) enclose the EGF-like 2; calcium-binding domain.

Belongs to the CRELD family. In terms of assembly, interacts with CHRNA4. Component of a complex containing at least CRELD2, MANF, MATN3 and PDIA4.

Its subcellular location is the endoplasmic reticulum. It carries out the reaction Catalyzes the rearrangement of -S-S- bonds in proteins.. In terms of biological role, protein disulfide isomerase. Might play a role in the unfolded protein response. May regulate transport of alpha4-beta2 neuronal acetylcholine receptor. The protein is Protein disulfide isomerase CRELD2 (CRELD2) of Cricetulus griseus (Chinese hamster).